Reading from the N-terminus, the 348-residue chain is MSPALYSAAKSVLFQMNPETAHKVTLWGLRLAEKMRVLPLVMGEVPSDPVEILGMKFPNRVGLAAGMDKEADTVSAFGQAGFGFVEVGTLTPRPQPGNEKPRLFRLIPQKAIINRMGFNNEGIAAGVENIRSATRFHGVLGVNIGKNKITPNEDAAQDYLTCLRAAWPVADYIAINFSSPNTPGLRDLQAAEPAARLLASLKSEQSNLAAETGRHVPIFMKVAPDVTDEHIAELSRVFLDEGLDGLIATNTTLSRVGVEANPRHEEAGGLSGAPLTERSTEVIGAFASELKGRIPIIGVGGIMNGVDAVAKIKAGASLVQLYTGFVYRGPDLIRECVEAMKAECPVHR.

FMN is bound by residues 65-69 (AGMDK) and Thr89. Lys69 is a binding site for substrate. Residue 114-118 (NRMGF) participates in substrate binding. Residues Asn143 and Asn176 each coordinate FMN. Residue Asn176 coordinates substrate. Catalysis depends on Ser179, which acts as the Nucleophile. Asn181 contributes to the substrate binding site. The FMN site is built by Lys221 and Thr249. Substrate is bound at residue 250-251 (NT). FMN is bound by residues Gly272, Gly301, and 322–323 (YT).

This sequence belongs to the dihydroorotate dehydrogenase family. Type 2 subfamily. As to quaternary structure, monomer. FMN serves as cofactor.

It is found in the cell membrane. It catalyses the reaction (S)-dihydroorotate + a quinone = orotate + a quinol. The protein operates within pyrimidine metabolism; UMP biosynthesis via de novo pathway; orotate from (S)-dihydroorotate (quinone route): step 1/1. Catalyzes the conversion of dihydroorotate to orotate with quinone as electron acceptor. The chain is Dihydroorotate dehydrogenase (quinone) from Akkermansia muciniphila (strain ATCC BAA-835 / DSM 22959 / JCM 33894 / BCRC 81048 / CCUG 64013 / CIP 107961 / Muc).